A 311-amino-acid chain; its full sequence is tRNA dimethylallyltransferase (311 aa).

9–16 (GPTAVGKT) is an ATP binding site. 11–16 (TAVGKT) contributes to the substrate binding site. An interaction with substrate tRNA region spans residues 34-37 (DSMQ).

Belongs to the IPP transferase family. Monomer. The cofactor is Mg(2+).

The enzyme catalyses adenosine(37) in tRNA + dimethylallyl diphosphate = N(6)-dimethylallyladenosine(37) in tRNA + diphosphate. In terms of biological role, catalyzes the transfer of a dimethylallyl group onto the adenine at position 37 in tRNAs that read codons beginning with uridine, leading to the formation of N6-(dimethylallyl)adenosine (i(6)A). The chain is tRNA dimethylallyltransferase from Clostridium botulinum (strain Hall / ATCC 3502 / NCTC 13319 / Type A).